The following is a 142-amino-acid chain: Universal stress protein C (142 aa).

This sequence belongs to the universal stress protein A family.

Its subcellular location is the cytoplasm. In terms of biological role, required for resistance to DNA-damaging agents. The sequence is that of Universal stress protein C (uspC) from Escherichia coli (strain K12).